The primary structure comprises 165 residues: SsrA-binding protein (165 aa).

This sequence belongs to the SmpB family.

The protein localises to the cytoplasm. In terms of biological role, required for rescue of stalled ribosomes mediated by trans-translation. Binds to transfer-messenger RNA (tmRNA), required for stable association of tmRNA with ribosomes. tmRNA and SmpB together mimic tRNA shape, replacing the anticodon stem-loop with SmpB. tmRNA is encoded by the ssrA gene; the 2 termini fold to resemble tRNA(Ala) and it encodes a 'tag peptide', a short internal open reading frame. During trans-translation Ala-aminoacylated tmRNA acts like a tRNA, entering the A-site of stalled ribosomes, displacing the stalled mRNA. The ribosome then switches to translate the ORF on the tmRNA; the nascent peptide is terminated with the 'tag peptide' encoded by the tmRNA and targeted for degradation. The ribosome is freed to recommence translation, which seems to be the essential function of trans-translation. The sequence is that of SsrA-binding protein from Ruthia magnifica subsp. Calyptogena magnifica.